The primary structure comprises 397 residues: Elongation factor Tu-2 (397 aa).

The tr-type G domain occupies 10–206 (KPHVNIGTIG…AVDEFVPEPV (197 aa)). The G1 stretch occupies residues 19–26 (GHIDHGKT). A GTP-binding site is contributed by 19-26 (GHIDHGKT). Thr-26 lines the Mg(2+) pocket. A G2 region spans residues 62–66 (GITIS). The segment at 83-86 (DCPG) is G3. Residues 83-87 (DCPGH) and 138-141 (NKTD) each bind GTP. Positions 138-141 (NKTD) are G4. The tract at residues 176-178 (SAL) is G5.

The protein belongs to the TRAFAC class translation factor GTPase superfamily. Classic translation factor GTPase family. EF-Tu/EF-1A subfamily. As to quaternary structure, monomer.

It is found in the cytoplasm. The catalysed reaction is GTP + H2O = GDP + phosphate + H(+). In terms of biological role, GTP hydrolase that promotes the GTP-dependent binding of aminoacyl-tRNA to the A-site of ribosomes during protein biosynthesis. This is Elongation factor Tu-2 from Streptomyces ramocissimus.